A 310-amino-acid polypeptide reads, in one-letter code: B3 domain-containing protein At4g02870 (310 aa).

A compositionally biased stretch (polar residues) spans 1-21 (MTLSDDPISPSTQESSNSSYV). The segment at 1 to 39 (MTLSDDPISPSTQESSNSSYVRSKEAEKNSPSQETDEEV) is disordered. A DNA-binding region (TF-B3) is located at residues 205-300 (RCGRLILQSS…RLQFGVISRN (96 aa)).

It localises to the nucleus. This is B3 domain-containing protein At4g02870 (ARF42) from Arabidopsis thaliana (Mouse-ear cress).